Reading from the N-terminus, the 529-residue chain is Bifunctional purine biosynthesis protein PurH (529 aa).

Residues 2 to 148 (QHLRPIRRAL…KNHKDVTIVV (147 aa)) enclose the MGS-like domain.

It belongs to the PurH family.

The enzyme catalyses (6R)-10-formyltetrahydrofolate + 5-amino-1-(5-phospho-beta-D-ribosyl)imidazole-4-carboxamide = 5-formamido-1-(5-phospho-D-ribosyl)imidazole-4-carboxamide + (6S)-5,6,7,8-tetrahydrofolate. It catalyses the reaction IMP + H2O = 5-formamido-1-(5-phospho-D-ribosyl)imidazole-4-carboxamide. The protein operates within purine metabolism; IMP biosynthesis via de novo pathway; 5-formamido-1-(5-phospho-D-ribosyl)imidazole-4-carboxamide from 5-amino-1-(5-phospho-D-ribosyl)imidazole-4-carboxamide (10-formyl THF route): step 1/1. It participates in purine metabolism; IMP biosynthesis via de novo pathway; IMP from 5-formamido-1-(5-phospho-D-ribosyl)imidazole-4-carboxamide: step 1/1. The protein is Bifunctional purine biosynthesis protein PurH of Proteus mirabilis (strain HI4320).